Here is a 427-residue protein sequence, read N- to C-terminus: Neuronal pentraxin-2 (427 aa).

An N-terminal signal peptide occupies residues 1–17 (MLALLAAGVAFAVVVLA). N-linked (GlcNAc...) asparagine glycosylation is found at N144 and N185. The 202-residue stretch at 219-420 (DAFKVSLPFR…GASKWPVETC (202 aa)) folds into the Pentraxin (PTX) domain. A disulfide bridge connects residues C249 and C309. Positions 273, 351, 352, 353, and 363 each coordinate Ca(2+). N389 carries N-linked (GlcNAc...) asparagine glycosylation.

Homooligomer or heterooligomer (probably pentamer) with neuronal pentraxin receptor (NPTXR). Requires Ca(2+) as cofactor. As to expression, testis specific.

Its subcellular location is the cytoplasmic vesicle. It is found in the secretory vesicle. The protein resides in the acrosome lumen. May be involved in binding, concentrating, and sorting soluble glycoproteins or glycolipids that are destined for the acrosome. The chain is Neuronal pentraxin-2 (NPTX2) from Cavia porcellus (Guinea pig).